The chain runs to 233 residues: MFNDHLAGAGNALTGIVGMAPEARPWANFVTMQLLVVAIIVVLFAILRPRLSPDRPGKLQHTFELVYGFLHEQAEEQIGHEGHHYLAFFGTIFIFILFANLIGVVPGFEAPTMVPSVPAGCAIAAFFYYNIVGVQANGLGRYLAHFAGPMPLLAPLMIPIELVSHMARPLSLTIRLFANMYAGEQVTMVFLKLTFLFVPAVFMGLHVFVSFLQAYIFMLLTMMYVAGAVAHEH.

6 helical membrane-spanning segments follow: residues 27–47 (ANFVTMQLLVVAIIVVLFAIL), 85–105 (YLAFFGTIFIFILFANLIGVV), 114–134 (VPSVPAGCAIAAFFYYNIVGV), 143–163 (LAHFAGPMPLLAPLMIPIELV), 189–209 (VFLKLTFLFVPAVFMGLHVFV), and 210–230 (SFLQAYIFMLLTMMYVAGAVA).

The protein belongs to the ATPase A chain family. In terms of assembly, F-type ATPases have 2 components, CF(1) - the catalytic core - and CF(0) - the membrane proton channel. CF(1) has five subunits: alpha(3), beta(3), gamma(1), delta(1), epsilon(1). CF(0) has three main subunits: a(1), b(2) and c(9-12). The alpha and beta chains form an alternating ring which encloses part of the gamma chain. CF(1) is attached to CF(0) by a central stalk formed by the gamma and epsilon chains, while a peripheral stalk is formed by the delta and b chains.

The protein resides in the cell inner membrane. Functionally, key component of the proton channel; it plays a direct role in the translocation of protons across the membrane. The chain is ATP synthase subunit a from Solibacter usitatus (strain Ellin6076).